Consider the following 509-residue polypeptide: Subtelomeric hrmA-associated cluster protein AFUA_5G14880 (509 aa).

Functionally, part of the subtelomeric hrmA-associated cluster (HAC) containing genes that alter the hyphal surface (such as reduced total chitin or increased beta-glucan exposure) and perturb inter-hyphal interactions within the developing biofilms, resulting in a loss of vertically aligned polarized growing filaments. Consequently, this hypoxia-typic morphotype (called H-MORPH) with altered biofilm architecture leads to increased hypoxia fitness, increased host inflammation, rapid disease progression, and mortality in a murine model of invasive aspergillosis. In Aspergillus fumigatus (strain ATCC MYA-4609 / CBS 101355 / FGSC A1100 / Af293) (Neosartorya fumigata), this protein is Subtelomeric hrmA-associated cluster protein AFUA_5G14880.